The sequence spans 225 residues: Enolase-phosphatase E1 (225 aa).

It belongs to the HAD-like hydrolase superfamily. MasA/MtnC family. Monomer. The cofactor is Mg(2+).

The enzyme catalyses 5-methylsulfanyl-2,3-dioxopentyl phosphate + H2O = 1,2-dihydroxy-5-(methylsulfanyl)pent-1-en-3-one + phosphate. The protein operates within amino-acid biosynthesis; L-methionine biosynthesis via salvage pathway; L-methionine from S-methyl-5-thio-alpha-D-ribose 1-phosphate: step 3/6. It functions in the pathway amino-acid biosynthesis; L-methionine biosynthesis via salvage pathway; L-methionine from S-methyl-5-thio-alpha-D-ribose 1-phosphate: step 4/6. In terms of biological role, bifunctional enzyme that catalyzes the enolization of 2,3-diketo-5-methylthiopentyl-1-phosphate (DK-MTP-1-P) into the intermediate 2-hydroxy-3-keto-5-methylthiopentenyl-1-phosphate (HK-MTPenyl-1-P), which is then dephosphorylated to form the acireductone 1,2-dihydroxy-3-keto-5-methylthiopentene (DHK-MTPene). The protein is Enolase-phosphatase E1 of Shewanella piezotolerans (strain WP3 / JCM 13877).